The sequence spans 574 residues: Sodium/hydrogen exchanger 8 (574 aa).

Helical transmembrane passes span 53–73 (MTIF…HLLI), 77–97 (LHFL…GAFI), 116–136 (PNMF…YSLH), 149–169 (LFSV…IYFL), 184–204 (FAFG…IFNA), 254–274 (LGYF…TGLI), 304–324 (GLAE…GIVM), 347–367 (VAFM…FSFP), 373–393 (SFVI…IFPL), 410–430 (MFIM…SLHL), and 444–464 (TTII…MPLI).

This sequence belongs to the monovalent cation:proton antiporter 1 (CPA1) transporter (TC 2.A.36) family.

Its subcellular location is the golgi apparatus membrane. Functionally, involved in pH regulation to eliminate acids generated by active metabolism or to counter adverse environmental conditions. Major proton extruding system driven by the inward sodium ion chemical gradient. Plays an important role in signal transduction. The polypeptide is Sodium/hydrogen exchanger 8 (Gallus gallus (Chicken)).